We begin with the raw amino-acid sequence, 394 residues long: Phosphoglycerate kinase (394 aa).

Residues 21–23 (DFN), R36, 59–62 (HLGR), R118, and R151 contribute to the substrate site. S183 bears the Phosphoserine mark. K201 is a binding site for ATP. T299 carries the phosphothreonine modification. Residues E323 and 350–353 (GGDS) each bind ATP.

It belongs to the phosphoglycerate kinase family. As to quaternary structure, monomer.

It is found in the cytoplasm. It carries out the reaction (2R)-3-phosphoglycerate + ATP = (2R)-3-phospho-glyceroyl phosphate + ADP. The protein operates within carbohydrate degradation; glycolysis; pyruvate from D-glyceraldehyde 3-phosphate: step 2/5. The polypeptide is Phosphoglycerate kinase (Bacillus pumilus (strain SAFR-032)).